Consider the following 388-residue polypeptide: MISKKLIIELLKQLISFKSVTPNDNGAIDFITNLLVKQGFKVYVKEFGQEYKVKNLYGYFGNGQPNICFAGHIDVVPAGFIEQWKYPPFCATQYKDKIYGRGVVDMKGAISAMLSAVFCFIDNNNDFNGTISFLITADEEGEALFGTKKMLEWINKQGHKIDFTILGEPTCTDKIGDTIKIGRRGSINFDLKVFGKQGHVAYPHLAINPNHLIVKILNSFIGSKIDEGNEFFAPSNLEVVSIDTNNNITNIIPEIAQSKFNIRFNDIHTNEQLLEIVKKNIEQFTTNYDLQSSCRSRPFLAKMSPYIFSFKELVHKVTKIKPEFSTSGGTSDAYFFKDYSPIVEFGLLNTMAHKINEYCLINDLQTLCRVYYNALCLFLMSNSKFRTN.

His-72 is a binding site for Zn(2+). Residue Asp-74 is part of the active site. Asp-105 serves as a coordination point for Zn(2+). Glu-139 functions as the Proton acceptor in the catalytic mechanism. Glu-140, Glu-168, and His-353 together coordinate Zn(2+).

It belongs to the peptidase M20A family. DapE subfamily. As to quaternary structure, homodimer. It depends on Zn(2+) as a cofactor. Co(2+) serves as cofactor.

The enzyme catalyses N-succinyl-(2S,6S)-2,6-diaminopimelate + H2O = (2S,6S)-2,6-diaminopimelate + succinate. The protein operates within amino-acid biosynthesis; L-lysine biosynthesis via DAP pathway; LL-2,6-diaminopimelate from (S)-tetrahydrodipicolinate (succinylase route): step 3/3. In terms of biological role, catalyzes the hydrolysis of N-succinyl-L,L-diaminopimelic acid (SDAP), forming succinate and LL-2,6-diaminopimelate (DAP), an intermediate involved in the bacterial biosynthesis of lysine and meso-diaminopimelic acid, an essential component of bacterial cell walls. In Orientia tsutsugamushi (strain Ikeda) (Rickettsia tsutsugamushi), this protein is Succinyl-diaminopimelate desuccinylase.